The sequence spans 249 residues: uncharacterized protein (249 aa).

Polar residues-rich tracts occupy residues 66–79 and 92–119; these read NASL…TISP and ASGS…SSSE. The interval 66–142 is disordered; it reads NASLESGQSS…GPTSPRVTPG (77 aa).

The protein resides in the plastid. The protein localises to the chloroplast. This is an uncharacterized protein from Chlorella vulgaris (Green alga).